The following is a 525-amino-acid chain: Estrogen receptor (525 aa).

The tract at residues 1–59 is disordered; it reads PTSPLVFVPSSPRLSPFMHPPSHHYLETTSTPVYRSSVSSSQQQLSREDQCGTSDDSYS. The interval 1–82 is modulating; that stretch reads PTSPLVFVPS…GFEMAKEMRF (82 aa). Low complexity predominate over residues 36–45; it reads SSVSSSQQQL. 2 consecutive NR C4-type zinc fingers follow at residues 83–103 and 119–143; these read CAVC…CEGC and CPAT…LRKC. Residues 83 to 148 constitute a DNA-binding region (nuclear receptor); that stretch reads CAVCSDYASG…RLRKCYQVGM (66 aa). The segment at 149 to 209 is hinge; that stretch reads MKGGVRKDRG…GGGKSSIIGM (61 aa). Over residues 154-182 the composition is skewed to basic and acidic residues; sequence RKDRGRVLRRDKRRTGTSDKASKDLEHRT. The segment at 154-203 is disordered; it reads RKDRGRVLRRDKRRTGTSDKASKDLEHRTAPPQDRRKHSSSSSSAGGGGK. The 237-residue stretch at 210–446 folds into the NR LBD domain; sequence SPDQVLLLLQ…DLLLEMLDAH (237 aa). The span at 452–465 shows a compositional bias: basic and acidic residues; sequence DRPAESWSQADREP. The tract at residues 452 to 525 is disordered; it reads DRPAESWSQA…GPRSDCTHIL (74 aa). Positions 479–493 are enriched in gly residues; it reads SGGGDGGPSSAGSGS.

The protein belongs to the nuclear hormone receptor family. NR3 subfamily. Binds DNA as a homodimer. Can form a heterodimer with ER-beta. Abundant in the liver, less abundant in the testes and barely detectable in the ovary and brain.

The protein resides in the nucleus. In terms of biological role, the steroid hormones and their receptors are involved in the regulation of eukaryotic gene expression and affect cellular proliferation and differentiation in target tissues. In Micropogonias undulatus (Atlantic croaker), this protein is Estrogen receptor (esr1).